Here is a 456-residue protein sequence, read N- to C-terminus: Gamma-aminobutyric acid receptor subunit alpha-1 (456 aa).

The first 27 residues, 1–27, serve as a signal peptide directing secretion; that stretch reads MKKSPGLSDYLWAWTLFLSTLTGRSYG. The Extracellular segment spans residues 28 to 253; that stretch reads QPSLQDELKD…FHLKRKIGYF (226 aa). N-linked (GlcNAc...) asparagine glycosylation is present at Asn38. Arg94 lines the 4-aminobutanoate pocket. A glycan (N-linked (GlcNAc...) asparagine) is linked at Asn138. Thr157 serves as a coordination point for 4-aminobutanoate. A disulfide bond links Cys166 and Cys180. A helical membrane pass occupies residues 254–274; the sequence is VIQTYLPCIMTVILSQVSFWL. Residues 275-279 lie on the Cytoplasmic side of the membrane; that stretch reads NRESV. Residues 280-301 traverse the membrane as a helical segment; that stretch reads PARTVFGVTTVLTMTTLSISAR. At 302–311 the chain is on the extracellular side; that stretch reads NSLPKVAYAT. A helical membrane pass occupies residues 312–333; sequence AMDWFIAVCYAFVFSALIEFAT. At 334–421 the chain is on the cytoplasmic side; it reads VNYFTKRGYA…TFNSVSKIDR (88 aa). Residues 422–441 traverse the membrane as a helical segment; it reads LSRIAFPLLFGIFNLVYWAT. The Extracellular portion of the chain corresponds to 442–456; the sequence is YLNREPQLKAPTPHQ.

Belongs to the ligand-gated ion channel (TC 1.A.9) family. Gamma-aminobutyric acid receptor (TC 1.A.9.5) subfamily. GABRA1 sub-subfamily. In terms of assembly, heteropentamer, formed by a combination of alpha (GABRA1-6), beta (GABRB1-3), gamma (GABRG1-3), delta (GABRD), epsilon (GABRE), rho (GABRR1-3), pi (GABRP) and theta (GABRQ) subunits, each subunit exhibiting distinct physiological and pharmacological properties. Interacts with UBQLN1. Interacts with TRAK1. Interacts with KIF21B. Identified in a complex of 720 kDa composed of LHFPL4, NLGN2, GABRA1, GABRB2, GABRG2 and GABRB3. Interacts with LHFPL4. Interacts with NLGN2. Interacts with SHISA7; interaction leads to the regulation of GABA(A) receptor trafficking, channel deactivation kinetics and pharmacology. In terms of tissue distribution, cerebellar granule cells, Purkinje cells and stellate/basket cells.

The protein localises to the postsynaptic cell membrane. The protein resides in the cell membrane. It localises to the cytoplasmic vesicle membrane. It carries out the reaction chloride(in) = chloride(out). With respect to regulation, allosterically activated by benzodiazepines, the neuroanesthetic alphaxalone and pentobarbital. Inhibited by the antagonist bicuculline. Potentiated by histamine. Its function is as follows. Alpha subunit of the heteropentameric ligand-gated chloride channel gated by gamma-aminobutyric acid (GABA), a major inhibitory neurotransmitter in the brain. GABA-gated chloride channels, also named GABA(A) receptors (GABAAR), consist of five subunits arranged around a central pore and contain GABA active binding site(s) located at the alpha and beta subunit interface(s). When activated by GABA, GABAARs selectively allow the flow of chloride anions across the cell membrane down their electrochemical gradient. Alpha-1/GABRA1-containing GABAARs are largely synaptic. Chloride influx into the postsynaptic neuron following GABAAR opening decreases the neuron ability to generate a new action potential, thereby reducing nerve transmission. GABAARs containing alpha-1 and beta-2 or -3 subunits exhibit synaptogenic activity; the gamma-2 subunit being necessary but not sufficient to induce rapid synaptic contacts formation. GABAARs function also as histamine receptor where histamine binds at the interface of two neighboring beta subunits and potentiates GABA response. GABAARs containing alpha, beta and epsilon subunits also permit spontaneous chloride channel activity while preserving the structural information required for GABA-gated openings. Alpha-1-mediated plasticity in the orbitofrontal cortex regulates context-dependent action selection. Together with rho subunits, may also control neuronal and glial GABAergic transmission in the cerebellum. This Bos taurus (Bovine) protein is Gamma-aminobutyric acid receptor subunit alpha-1 (GABRA1).